A 335-amino-acid chain; its full sequence is NmrA-like family domain-containing oxidoreductase hkm9 (335 aa).

Residues 12–17, 38–42, 59–60, 80–82, K137, and 161–164 contribute to the NADP(+) site; these read GATGNQ, RNPNS, DG, INS, and YLEN.

Belongs to the NmrA-type oxidoreductase family.

The protein operates within secondary metabolite biosynthesis. Functionally, nmrA-like family domain-containing oxidoreductase; part of the gene cluster that mediates the biosynthesis of hancockiamides, an unusual new family of N-cinnamoylated piperazines. The NRPS hkm10 and the NmrA-like reductase hkm9 are proposed to convert two molecules of L-Phe to the intermediary piperazine called xenocockiamide A. Xenocockiamide A is then converted to hancockiamide D via a series of hydroxylations and O-methylations. The tyrosinase hkm6 may catalyze an aromatic hydroxylation, then the 2-oxoglutarate-dependent Fe(II) dioxygenase hkm4 and the FAD-dependent phenol hydroxylase hkm7 may catalyze consecutive hydroxylations to install 2 more hydroxy groups, and the methyltransferase hkm8 probably catalyzes two methylations using 2 molecules of S-adenosyl-L-methionine (SAM). The NRPS hkm11 activates and transfers trans-cinnamate supplied by the PAL hkm12 to hancockiamide D and produces hancockiamide A. NRPS Hkm11 has the flexibility to tolerate the bulky hancockiamide G as a substrate and the absence of the acetyl-transferase hkm3 opens up the opportunity for hkm11 to introduce a second N-cinnamoyl moiety. The cytochrome P450 monooxygenase hkm5 catalyzes the methylenedioxy bridge formation, converting hancockiamide A into hancockiamide G. Hkm5 can also convert hancockiamide B into hancockiamide C, and hancockiamide D into hancockiamide H. The N-acetyltransferase hkm3 finally transfers an acetyl group to 1-N of piperazine, converting hancockiamide A into hancockiamide B and hancockiamide G into hancockiamide C. The polypeptide is NmrA-like family domain-containing oxidoreductase hkm9 (Aspergillus hancockii).